A 167-amino-acid chain; its full sequence is Translationally-controlled tumor protein homolog (167 aa).

The 167-residue stretch at 1–167 folds into the TCTP domain; that stretch reads MIIYKDIFSN…WKHGIVEEKI (167 aa). Serine 9 and serine 15 each carry phosphoserine.

The protein belongs to the TCTP family. In terms of assembly, interacts with the 40S and 60S ribosomal subunits. Interacts with microtubules.

The protein localises to the cytoplasm. Its subcellular location is the cytoskeleton. It is found in the mitochondrion. Functionally, involved in protein synthesis. Involved in microtubule stabilization. The sequence is that of Translationally-controlled tumor protein homolog (TMA19) from Saccharomyces cerevisiae (strain ATCC 204508 / S288c) (Baker's yeast).